The chain runs to 306 residues: Acetyl-coenzyme A carboxylase carboxyl transferase subunit beta (306 aa).

The CoA carboxyltransferase N-terminal domain maps to 27–296 (LWHKCPSCEA…PRFVAPVIEP (270 aa)). Residues Cys31, Cys34, Cys50, and Cys53 each contribute to the Zn(2+) site. A C4-type zinc finger spans residues 31–53 (CPSCEAVLYRPELEKTLDVCPKC).

It belongs to the AccD/PCCB family. In terms of assembly, acetyl-CoA carboxylase is a heterohexamer composed of biotin carboxyl carrier protein (AccB), biotin carboxylase (AccC) and two subunits each of ACCase subunit alpha (AccA) and ACCase subunit beta (AccD). The cofactor is Zn(2+).

The protein localises to the cytoplasm. It catalyses the reaction N(6)-carboxybiotinyl-L-lysyl-[protein] + acetyl-CoA = N(6)-biotinyl-L-lysyl-[protein] + malonyl-CoA. It participates in lipid metabolism; malonyl-CoA biosynthesis; malonyl-CoA from acetyl-CoA: step 1/1. Functionally, component of the acetyl coenzyme A carboxylase (ACC) complex. Biotin carboxylase (BC) catalyzes the carboxylation of biotin on its carrier protein (BCCP) and then the CO(2) group is transferred by the transcarboxylase to acetyl-CoA to form malonyl-CoA. The chain is Acetyl-coenzyme A carboxylase carboxyl transferase subunit beta from Pseudomonas savastanoi pv. phaseolicola (strain 1448A / Race 6) (Pseudomonas syringae pv. phaseolicola (strain 1448A / Race 6)).